A 438-amino-acid chain; its full sequence is LIM domain-containing protein C4F6.12 (438 aa).

2 disordered regions span residues 1–37 and 49–78; these read MHSP…NNLV and TGGR…TIKQ. Polar residues predominate over residues 24-37; that stretch reads SPVSTNGSPLNNLV. 2 positions are modified to phosphoserine: S67 and S96. 3 LIM zinc-binding domains span residues 256–316, 318–375, and 376–435; these read KSCH…QFSP, CKHC…NKYA, and VKCK…SVKF.

In Schizosaccharomyces pombe (strain 972 / ATCC 24843) (Fission yeast), this protein is LIM domain-containing protein C4F6.12.